We begin with the raw amino-acid sequence, 206 residues long: Large ribosomal subunit protein uL4 (206 aa).

The protein belongs to the universal ribosomal protein uL4 family. As to quaternary structure, part of the 50S ribosomal subunit.

In terms of biological role, one of the primary rRNA binding proteins, this protein initially binds near the 5'-end of the 23S rRNA. It is important during the early stages of 50S assembly. It makes multiple contacts with different domains of the 23S rRNA in the assembled 50S subunit and ribosome. Forms part of the polypeptide exit tunnel. The polypeptide is Large ribosomal subunit protein uL4 (Bradyrhizobium diazoefficiens (strain JCM 10833 / BCRC 13528 / IAM 13628 / NBRC 14792 / USDA 110)).